The following is a 551-amino-acid chain: Sodium-dependent high-affinity dicarboxylate transporter 2 (551 aa).

A run of 10 helical transmembrane segments spans residues 9–29 (LIKK…LFFG), 34–54 (CLFS…PIGV), 82–102 (SIVL…TGLH), 119–139 (VMLL…SDTA), 194–214 (FCKA…TAII), 243–263 (WMVF…IILV), 347–367 (VSGV…FDPI), 417–437 (IFVG…IVIM), 449–469 (IFIP…LYLA), and 497–517 (VISM…CILI).

It belongs to the SLC13A/DASS transporter (TC 2.A.47) family. NADC subfamily.

Its subcellular location is the membrane. Functionally, high-affinity sodium-dicarboxylate cotransporter that accepts a range of tricarboxylic acid-cycle intermediates with 4-5 carbon atoms. There is no interaction with monocarboxylates. This chain is Sodium-dependent high-affinity dicarboxylate transporter 2 (nac-2), found in Caenorhabditis elegans.